Reading from the N-terminus, the 203-residue chain is Sperm-specific protein PHI-2B/PHI-3 (203 aa).

Basic residues predominate over residues 1 to 35 (MPSPSRKSRSRSRSRSKSPKRSPAKKARKTPKKPR). Disordered stretches follow at residues 1 to 46 (MPSP…PSTL) and 104 to 203 (KTSA…KSKK). The H15 domain maps to 41 to 120 (KKPSTLSMIV…GATGSFRVGK (80 aa)). Basic residues-rich tracts occupy residues 126–140 (KKAK…KSSK) and 147–203 (KAKK…KSKK).

Post-translationally, PL-II* and PL-IV are produced by post-translational cleavage of a common precursor. As to expression, sperm.

It is found in the nucleus. Its subcellular location is the chromosome. Linker histones are implicated in chromatin remodeling and/or transcriptional regulation during spermiogenesis, the process of spermatid maturation into spermatozoa. Protamines substitute for histones in the chromatin of sperm during the haploid phase of spermatogenesis. They compact sperm DNA into a highly condensed, stable and inactive complex. In Mytilus trossulus (Blue mussel), this protein is Sperm-specific protein PHI-2B/PHI-3.